A 72-amino-acid polypeptide reads, in one-letter code: Alpha-mammal toxin Bot3 (72 aa).

The signal sequence occupies residues 1 to 8; it reads LVMAGVES. Residues 10–72 enclose the LCN-type CS-alpha/beta domain; the sequence is KDGYIVDDRN…VRTKGPGRCN (63 aa). Disulfide bonds link Cys20-Cys71, Cys24-Cys44, Cys30-Cys54, and Cys34-Cys56. Asn72 bears the Asparagine amide mark.

The protein belongs to the long (4 C-C) scorpion toxin superfamily. Sodium channel inhibitor family. Alpha subfamily. Post-translationally, when the toxin is not amidated, there are 75% loss of toxicity to mice, and total incapacity to bind rat brain synaptosomes. As to expression, expressed by the venom gland.

The protein localises to the secreted. Its function is as follows. Alpha toxins bind voltage-independently at site-3 of sodium channels (Nav) and inhibit the inactivation of the activated channels, thereby blocking neuronal transmission. Is active against mammals and binds with high affinity to rat brain synaptosomes. This Buthus occitanus tunetanus (Common European scorpion) protein is Alpha-mammal toxin Bot3.